The sequence spans 1383 residues: DNA-directed RNA polymerase subunit beta'' (1383 aa).

Zn(2+) is bound by residues C220, C289, C296, and C299.

This sequence belongs to the RNA polymerase beta' chain family. RpoC2 subfamily. As to quaternary structure, in plastids the minimal PEP RNA polymerase catalytic core is composed of four subunits: alpha, beta, beta', and beta''. When a (nuclear-encoded) sigma factor is associated with the core the holoenzyme is formed, which can initiate transcription. Requires Zn(2+) as cofactor.

It is found in the plastid. Its subcellular location is the chloroplast. The catalysed reaction is RNA(n) + a ribonucleoside 5'-triphosphate = RNA(n+1) + diphosphate. Functionally, DNA-dependent RNA polymerase catalyzes the transcription of DNA into RNA using the four ribonucleoside triphosphates as substrates. In Oenothera elata subsp. hookeri (Hooker's evening primrose), this protein is DNA-directed RNA polymerase subunit beta''.